Consider the following 136-residue polypeptide: Histone H2A (136 aa).

Gly residues predominate over residues 1–11 (MSSGGKSGGKA). The tract at residues 1-24 (MSSGGKSGGKAGDASSKAQSRSAK) is disordered. N6-acetyllysine is present on residues lysine 6 and lysine 10. A compositionally biased stretch (low complexity) spans 12–24 (GDASSKAQSRSAK). Glutamine 108 is modified (N5-methylglutamine). A Phosphoserine modification is found at serine 133. Positions 133–134 (SQ) match the [ST]-Q motif motif.

It belongs to the histone H2A family. The nucleosome is a histone octamer containing two molecules each of H2A, H2B, H3 and H4 assembled in one H3-H4 heterotetramer and two H2A-H2B heterodimers. The octamer wraps approximately 147 bp of DNA. Phosphorylated to form H2AS128ph (gamma-H2A) in response to DNA double-strand breaks (DSBs) generated by exogenous genotoxic agents and by stalled replication forks. Phosphorylation is dependent on the DNA damage checkpoint kinases MEC1/ATR and TEL1/ATM, spreads on either side of a detected DSB site and may mark the surrounding chromatin for recruitment of proteins required for DNA damage signaling and repair. Gamma-H2A is removed from the DNA prior to the strand invasion-primer extension step of the repair process and subsequently dephosphorylated. Dephosphorylation is necessary for efficient recovery from the DNA damage checkpoint. Post-translationally, acetylated by ESA1 to form H2AK4ac and H2AK7ac.

Its subcellular location is the nucleus. The protein resides in the chromosome. Core component of nucleosome which plays a central role in DNA double strand break (DSB) repair. Nucleosomes wrap and compact DNA into chromatin, limiting DNA accessibility to the cellular machineries which require DNA as a template. Histones thereby play a central role in transcription regulation, DNA repair, DNA replication and chromosomal stability. DNA accessibility is regulated via a complex set of post-translational modifications of histones, also called histone code, and nucleosome remodeling. This Mycosarcoma maydis (Corn smut fungus) protein is Histone H2A (HTA1).